Reading from the N-terminus, the 168-residue chain is G/U mismatch-specific DNA glycosylase (168 aa).

Belongs to the uracil-DNA glycosylase (UDG) superfamily. TDG/mug family. Binds DNA as a monomer.

Its subcellular location is the cytoplasm. The catalysed reaction is Specifically hydrolyzes mismatched double-stranded DNA and polynucleotides, releasing free uracil.. Excises ethenocytosine and uracil, which can arise by alkylation or deamination of cytosine, respectively, from the corresponding mispairs with guanine in ds-DNA. It is capable of hydrolyzing the carbon-nitrogen bond between the sugar-phosphate backbone of the DNA and the mispaired base. The complementary strand guanine functions in substrate recognition. Required for DNA damage lesion repair in stationary-phase cells. In Shigella dysenteriae serotype 1 (strain Sd197), this protein is G/U mismatch-specific DNA glycosylase.